Reading from the N-terminus, the 357-residue chain is Heat-inducible transcription repressor HrcA (357 aa).

The protein belongs to the HrcA family.

Its function is as follows. Negative regulator of class I heat shock genes (grpE-dnaK-dnaJ and groELS operons). Prevents heat-shock induction of these operons. The protein is Heat-inducible transcription repressor HrcA of Chlorobium phaeobacteroides (strain DSM 266 / SMG 266 / 2430).